Reading from the N-terminus, the 190-residue chain is Inosine triphosphate pyrophosphatase (190 aa).

9–14 (TGNAKK) serves as a coordination point for ITP. Residue E39 participates in Mg(2+) binding. Residues K51, 67 to 68 (DT), K84, 144 to 147 (FGWD), K167, and 172 to 173 (HR) contribute to the ITP site.

The protein belongs to the HAM1 NTPase family. Homodimer. The cofactor is Mg(2+). Mn(2+) is required as a cofactor.

The protein resides in the cytoplasm. The enzyme catalyses ITP + H2O = IMP + diphosphate + H(+). The catalysed reaction is dITP + H2O = dIMP + diphosphate + H(+). It catalyses the reaction XTP + H2O = XMP + diphosphate + H(+). Its function is as follows. Pyrophosphatase that hydrolyzes non-canonical purine nucleotides such as inosine triphosphate (ITP), deoxyinosine triphosphate (dITP) or xanthosine 5'-triphosphate (XTP) to their respective monophosphate derivatives. The enzyme does not distinguish between the deoxy- and ribose forms. Probably excludes non-canonical purines from RNA and DNA precursor pools, thus preventing their incorporation into RNA and DNA and avoiding chromosomal lesions. The chain is Inosine triphosphate pyrophosphatase from Pediculus humanus subsp. corporis (Body louse).